Here is a 98-residue protein sequence, read N- to C-terminus: MSKQENNEDMITLIDENGNEQLFKELFTFDSDDYGKSYIFIYPAEQENDDSVDIQAYIIADNEDNDGQDLVPIEDDKEWDMVEEVLNTFLDNDGNFKA.

This sequence belongs to the UPF0473 family.

The polypeptide is UPF0473 protein LAR_0522 (Limosilactobacillus reuteri subsp. reuteri (strain JCM 1112) (Lactobacillus reuteri)).